The chain runs to 43 residues: uncharacterized protein (43 aa).

This is an uncharacterized protein from Homo sapiens (Human).